The following is a 139-amino-acid chain: MRTLWILAVLLVGVEGHLLQFETMIIKMTKQTGLFSYSFYGCYCGWGGHGRPQDPTDRCCFVHDCCYGKVTNCDPKAAAYSYTIENGGIVCGGDDPCKKQICECDRAAAMCFRDNLDTYNYAKYWKFSAKDCQEESDPC.

The signal sequence occupies residues 1-16; it reads MRTLWILAVLLVGVEG. 7 cysteine pairs are disulfide-bonded: Cys42–Cys132, Cys44–Cys60, Cys59–Cys111, Cys65–Cys139, Cys66–Cys104, Cys73–Cys97, and Cys91–Cys102. Tyr43, Gly45, and Gly47 together coordinate Ca(2+). The active site involves His63. Asp64 contacts Ca(2+). The active site involves Asp105.

The cofactor is Ca(2+). As to expression, expressed by the venom gland.

The protein resides in the secreted. It catalyses the reaction a 1,2-diacyl-sn-glycero-3-phosphocholine + H2O = a 1-acyl-sn-glycero-3-phosphocholine + a fatty acid + H(+). Functionally, PLA2 catalyzes the calcium-dependent hydrolysis of the 2-acyl groups in 3-sn-phosphoglycerides. This is Acidic phospholipase A2 Ts-A4 from Trimeresurus stejnegeri (Chinese green tree viper).